Reading from the N-terminus, the 772-residue chain is Mitochondrial intermediate peptidase (772 aa).

The transit peptide at 1 to 37 directs the protein to the mitochondrion; that stretch reads MLRTIILKAGSNASIPSPSRQNKLLRFFATAGAVSRT. H558 provides a ligand contact to Zn(2+). E559 is an active-site residue. H562 and E587 together coordinate Zn(2+).

Belongs to the peptidase M3 family. Requires Zn(2+) as cofactor.

The protein localises to the mitochondrion matrix. It catalyses the reaction Release of an N-terminal octapeptide as second stage of processing of some proteins imported into the mitochondrion.. Stimulated by Fe(2+). Its function is as follows. Cleaves proteins, imported into the mitochondrion, to their mature size. While most mitochondrial precursor proteins are processed to the mature form in one step by mitochondrial processing peptidase (MPP), the sequential cleavage by MIP of an octapeptide after initial processing by MPP is a required step for a subgroup of nuclear-encoded precursor proteins destined for the matrix or the inner membrane. Cleaves precursor proteins of respiratory components, including subunits of the electron transport chain and tricarboxylic acid cycle enzymes, and components of the mitochondrial genetic machinery, including ribosomal proteins, translation factors, and proteins required for mitochondrial DNA metabolism. This is Mitochondrial intermediate peptidase (OCT1) from Saccharomyces cerevisiae (strain ATCC 204508 / S288c) (Baker's yeast).